Reading from the N-terminus, the 144-residue chain is Bradykinin-potentiating and C-type natriuretic peptides isoform 2 (144 aa).

The first 23 residues, methionine 1–glycine 23, serve as a signal peptide directing secretion. A propeptide spanning residues lysine 24–alanine 30 is cleaved from the precursor. Glutamine 31 carries the post-translational modification Pyrrolidone carboxylic acid. A propeptide spanning residues leucine 41–alanine 47 is cleaved from the precursor. Position 48 is a pyrrolidone carboxylic acid (glutamine 48). Positions leucine 61 to alanine 67 are excised as a propeptide. Glutamine 68 is modified (pyrrolidone carboxylic acid). Residues leucine 78–alanine 84 constitute a propeptide that is removed on maturation. The segment at glutamine 81–proline 110 is disordered. Glutamine 85 carries the pyrrolidone carboxylic acid modification. Residues leucine 96–alanine 102 constitute a propeptide that is removed on maturation. Glutamine 103 carries the post-translational modification Pyrrolidone carboxylic acid. The propeptide occupies alanine 114–leucine 116. A Pyrrolidone carboxylic acid modification is found at glutamine 117. A propeptide is located at residue valine 122. Glutamine 123 bears the Pyrrolidone carboxylic acid mark. Residues valine 128 to threonine 144 constitute a propeptide that is removed on maturation.

This sequence in the N-terminal section; belongs to the bradykinin-potentiating peptide family. As to expression, expressed by venom gland.

Its subcellular location is the secreted. The protein resides in the cytoplasm. The protein localises to the cytosol. Peptide with several activities. It inhibits the activity of the angiotensin-converting enzyme (ACE) by a preferential interaction with its C-domain. It evokes transient hypotension (-14 mmHg) similar to that evoked by 0.5 ug of bradykinin, when injected alone into rats. It has a high bradykinin-potentiating effect (120%), when 60 nmol of BPP-10c are coinjected with 0.5 ug of bradykinin into rats. Does not affect angiotensin-1 pressor effects. Shows potent and long-lasting antihypertensive activity as well as a reduction of the heart rate. It also binds and dose-dependently promotes the activation of cytosolic argininosuccinate synthase (ASS1), an enzyme that catalyzes the conversion of citrulline, L-aspartate and ATP to argininosuccinate, AMP and pyrophosphate. It also enhances ASS1-dependent arginine production in HEK 293 cells, as well as in spontaneous hypertensive rat (SHR) and Wistar rat plasma. In addition, it induces the production of nitric-oxide (NO) by HUVEC cells via the endothelial nitric-oxide synthase (NOS3), which use arginine as a substrate and produce NO. It has been shown to be internalized by ASS1-expressing endothelial (HUVEC) and kidney (HEK 293) cells, and is detected homogenously distributed within the cell cytoplasm for up to 2 hours. Functionally, acts as indirect hypotensive agent. Increases leukocyte rolling flux and adhesion by five-fold in post-capillary venules, without any increments in vasodilation of arterioles. In terms of biological role, acts as indirect hypotensive agent. Potently induces vasodilation of arterioles, with only a small increase in leukocyte rolling flux. The protein is Bradykinin-potentiating and C-type natriuretic peptides isoform 2 of Bothrops jararacussu (Jararacussu).